The following is a 957-amino-acid chain: Glycine dehydrogenase (decarboxylating) (957 aa).

Lysine 708 is modified (N6-(pyridoxal phosphate)lysine).

Belongs to the GcvP family. As to quaternary structure, the glycine cleavage system is composed of four proteins: P, T, L and H. The cofactor is pyridoxal 5'-phosphate.

It catalyses the reaction N(6)-[(R)-lipoyl]-L-lysyl-[glycine-cleavage complex H protein] + glycine + H(+) = N(6)-[(R)-S(8)-aminomethyldihydrolipoyl]-L-lysyl-[glycine-cleavage complex H protein] + CO2. Its function is as follows. The glycine cleavage system catalyzes the degradation of glycine. The P protein binds the alpha-amino group of glycine through its pyridoxal phosphate cofactor; CO(2) is released and the remaining methylamine moiety is then transferred to the lipoamide cofactor of the H protein. This chain is Glycine dehydrogenase (decarboxylating), found in Shigella boydii serotype 4 (strain Sb227).